The following is a 697-amino-acid chain: ATP-dependent zinc metalloprotease FtsH (697 aa).

The segment at 1 to 23 is disordered; sequence MSQNERDSLELERKNTPPDGPRL. The Cytoplasmic segment spans residues 1 to 29; sequence MSQNERDSLELERKNTPPDGPRLPERRPR. The helical transmembrane segment at 30 to 50 threads the bilayer; sequence FSVWIYLAIFLALLVHFFLFW. Residues 51-158 lie on the Periplasmic side of the membrane; it reads TGTDTSTIEY…QFTARIEENW (108 aa). The chain crosses the membrane as a helical span at residues 159–179; sequence FGGLLTWIFPLILIVALWVFL. The Cytoplasmic segment spans residues 180 to 697; sequence LRRMSPSSQV…TERPESSSAP (518 aa). 251-258 serves as a coordination point for ATP; sequence GPPGTGKT. A Zn(2+)-binding site is contributed by histidine 474. Residue glutamate 475 is part of the active site. Residues histidine 478 and aspartate 550 each contribute to the Zn(2+) site. The tract at residues 649–697 is disordered; the sequence is GPRPYGDYPSPNGKDVEELKDLQKGEPTSSSAVEAPAPQTERPESSSAP. Residues 662-672 show a composition bias toward basic and acidic residues; it reads KDVEELKDLQK.

The protein in the central section; belongs to the AAA ATPase family. In the C-terminal section; belongs to the peptidase M41 family. Homohexamer. It depends on Zn(2+) as a cofactor.

The protein localises to the cell inner membrane. Its function is as follows. Acts as a processive, ATP-dependent zinc metallopeptidase for both cytoplasmic and membrane proteins. Plays a role in the quality control of integral membrane proteins. In Rhodothermus marinus (strain ATCC 43812 / DSM 4252 / R-10) (Rhodothermus obamensis), this protein is ATP-dependent zinc metalloprotease FtsH.